A 422-amino-acid chain; its full sequence is Imidazolonepropionase (422 aa).

His-82 and His-84 together coordinate Fe(3+). 2 residues coordinate Zn(2+): His-82 and His-84. 4-imidazolone-5-propanoate-binding residues include Arg-91, Tyr-154, and His-187. Tyr-154 contributes to the N-formimidoyl-L-glutamate binding site. Residue His-252 coordinates Fe(3+). His-252 provides a ligand contact to Zn(2+). Glu-255 contacts 4-imidazolone-5-propanoate. Residue Asp-327 coordinates Fe(3+). Residue Asp-327 coordinates Zn(2+). N-formimidoyl-L-glutamate contacts are provided by Asn-329 and Gly-331. Ser-332 provides a ligand contact to 4-imidazolone-5-propanoate.

The protein belongs to the metallo-dependent hydrolases superfamily. HutI family. Requires Zn(2+) as cofactor. It depends on Fe(3+) as a cofactor.

Its subcellular location is the cytoplasm. The enzyme catalyses 4-imidazolone-5-propanoate + H2O = N-formimidoyl-L-glutamate. It participates in amino-acid degradation; L-histidine degradation into L-glutamate; N-formimidoyl-L-glutamate from L-histidine: step 3/3. Its function is as follows. Catalyzes the hydrolytic cleavage of the carbon-nitrogen bond in imidazolone-5-propanoate to yield N-formimidoyl-L-glutamate. It is the third step in the universal histidine degradation pathway. This is Imidazolonepropionase from Alkaliphilus metalliredigens (strain QYMF).